Consider the following 188-residue polypeptide: Glandular kallikrein-3, submandibular (188 aa).

Residues 1–185 (NYHVLLGQNN…FTSWIKEVMK (185 aa)) enclose the Peptidase S1 domain. N10 and N36 each carry an N-linked (GlcNAc...) asparagine glycan. The active-site Charge relay system is the D47. Disulfide bonds link C79/C146, C111/C125, and C136/C161. The active-site Charge relay system is the S140.

This sequence belongs to the peptidase S1 family. Kallikrein subfamily.

It carries out the reaction Preferential cleavage of Arg-|-Xaa bonds in small molecule substrates. Highly selective action to release kallidin (lysyl-bradykinin) from kininogen involves hydrolysis of Met-|-Xaa or Leu-|-Xaa.. Glandular kallikreins cleave Met-Lys and Arg-Ser bonds in kininogen to release Lys-bradykinin. The sequence is that of Glandular kallikrein-3, submandibular (Klk3) from Rattus norvegicus (Rat).